Here is a 245-residue protein sequence, read N- to C-terminus: 4-hydroxy-tetrahydrodipicolinate reductase (245 aa).

NAD(+) contacts are provided by residues 7 to 12 (GAKGKV), 75 to 77 (GTT), and 102 to 105 (APNF). His132 acts as the Proton donor/acceptor in catalysis. (S)-2,3,4,5-tetrahydrodipicolinate is bound at residue His133. The Proton donor role is filled by Lys136. 142 to 143 (GT) serves as a coordination point for (S)-2,3,4,5-tetrahydrodipicolinate.

Belongs to the DapB family.

The protein localises to the cytoplasm. The enzyme catalyses (S)-2,3,4,5-tetrahydrodipicolinate + NAD(+) + H2O = (2S,4S)-4-hydroxy-2,3,4,5-tetrahydrodipicolinate + NADH + H(+). The catalysed reaction is (S)-2,3,4,5-tetrahydrodipicolinate + NADP(+) + H2O = (2S,4S)-4-hydroxy-2,3,4,5-tetrahydrodipicolinate + NADPH + H(+). The protein operates within amino-acid biosynthesis; L-lysine biosynthesis via DAP pathway; (S)-tetrahydrodipicolinate from L-aspartate: step 4/4. Its function is as follows. Catalyzes the conversion of 4-hydroxy-tetrahydrodipicolinate (HTPA) to tetrahydrodipicolinate. This is 4-hydroxy-tetrahydrodipicolinate reductase from Mycobacterium sp. (strain KMS).